We begin with the raw amino-acid sequence, 603 residues long: Geraniol synthase, chloroplastic (603 aa).

A chloroplast-targeting transit peptide spans 1-35 (MSSISQKVVIGLNKAAANNNLQNLDRRGFKTRCVS). Residues R319, D356, D360, R497, and D500 each contribute to the (2E)-geranyl diphosphate site. The Mg(2+) site is built by D356 and D360. The DDXXD motif motif lies at 356–360 (DDVYD). Mg(2+)-binding residues include D500, T504, and E508.

Belongs to the terpene synthase family. Tpsb subfamily. As to quaternary structure, monomer. The cofactor is Mg(2+). Mn(2+) serves as cofactor.

It is found in the plastid. It localises to the chloroplast. It carries out the reaction (2E)-geranyl diphosphate + H2O = (2E)-geraniol + diphosphate. It participates in secondary metabolite biosynthesis; terpenoid biosynthesis. In terms of biological role, monoterpene synthase (mono-TPS) involved in the biosynthesis of monoterpenes natural products. Catalyzes the conversion of (2E)-geranyl diphosphate (GPP) into geraniol. This chain is Geraniol synthase, chloroplastic, found in Perilla frutescens var. hirtella (Perilla citriodora).